We begin with the raw amino-acid sequence, 291 residues long: Proteasome subunit beta (291 aa).

The propeptide at 1–56 (MTRSFPDRLPTNLAFPGISVINQSSFVDLLRRQAPELLPVSLGGGQSGGGQQLSHG) is removed in mature form; by autocatalysis. The active-site Nucleophile is Thr-57.

The protein belongs to the peptidase T1B family. In terms of assembly, the 20S proteasome core is composed of 14 alpha and 14 beta subunits that assemble into four stacked heptameric rings, resulting in a barrel-shaped structure. The two inner rings, each composed of seven catalytic beta subunits, are sandwiched by two outer rings, each composed of seven alpha subunits. The catalytic chamber with the active sites is on the inside of the barrel. Has a gated structure, the ends of the cylinder being occluded by the N-termini of the alpha-subunits. Is capped by the proteasome-associated ATPase, ARC.

The protein resides in the cytoplasm. It catalyses the reaction Cleavage of peptide bonds with very broad specificity.. It functions in the pathway protein degradation; proteasomal Pup-dependent pathway. The formation of the proteasomal ATPase ARC-20S proteasome complex, likely via the docking of the C-termini of ARC into the intersubunit pockets in the alpha-rings, may trigger opening of the gate for substrate entry. Interconversion between the open-gate and close-gate conformations leads to a dynamic regulation of the 20S proteasome proteolysis activity. Functionally, component of the proteasome core, a large protease complex with broad specificity involved in protein degradation. This is Proteasome subunit beta from Mycobacterium leprae (strain Br4923).